We begin with the raw amino-acid sequence, 429 residues long: MKFVLETVSKCSGRLGSLSGVDRLASSAKFQTPTLVLHTKGGSVPHLSKEVLHYLTGAEPQLMQYSLNGTVHMEEAVRGCGDGLSGFVAQKESVSLLVLRDPAEPCQPGYHEKDVVPVFGRSGRKNFTAESYMSLVEAFRPDVYVPLFDGDTDGGSSKKREQRSQERTETFVEQCLEVHRKSEKLKGASVLGPIVGGYNKKLREKSVQFVERLKDDFAGYFIAGLHSYGSSASEVKEAPLLDIVSSVCQQLPLEKPKFLFGAFTPQLVLELVVRGVDIFDTSYPYLKTQQNRALNFSFDTSDSNVVARKNELDLTDACWAEDFTGFVDGCQCLACTKHTKAYTHHLYNTREMLAPILLMIHNLHHYFEFFKAIRRHVAQDTVGELIAHINKHVVLPVTDGVVKEPGKSLDGVELKESASVQVEAKRVKV.

Zn(2+) is bound by residues Cys-330, Cys-332, Cys-335, and His-361.

The protein belongs to the queuine tRNA-ribosyltransferase family. QTRT2 subfamily. Heterodimer of a catalytic subunit and an accessory subunit. The cofactor is Zn(2+).

It localises to the cytoplasm. Functionally, non-catalytic subunit of the queuine tRNA-ribosyltransferase (TGT) that catalyzes the base-exchange of a guanine (G) residue with queuine (Q) at position 34 (anticodon wobble position) in tRNAs with GU(N) anticodons (tRNA-Asp, -Asn, -His and -Tyr), resulting in the hypermodified nucleoside queuosine (7-(((4,5-cis-dihydroxy-2-cyclopenten-1-yl)amino)methyl)-7-deazaguanosine). The polypeptide is Queuine tRNA-ribosyltransferase accessory subunit 2 (Culex quinquefasciatus (Southern house mosquito)).